The chain runs to 236 residues: CD81 antigen (236 aa).

Topologically, residues 1 to 12 are cytoplasmic; the sequence is MGVEGCTKCIKY. A helical membrane pass occupies residues 13 to 33; the sequence is LLFVFNFVFWLAGGVILGVAL. At 34-63 the chain is on the extracellular side; it reads WLRHDPQTTTLLYLELGDKPAPSTFYVGIY. Residues 64 to 84 traverse the membrane as a helical segment; sequence ILIAVGAVMMFVGFLGCYGAI. The Cytoplasmic segment spans residues 85–89; that stretch reads QESQC. Residues 90–112 form a helical membrane-spanning segment; sequence LLGTFFTCLVILFACEVAAGIWG. Residues 113–201 lie on the Extracellular side of the membrane; the sequence is FVNKDQIAKD…QKIDELFSGK (89 aa). 2 disulfides stabilise this stretch: cysteine 156–cysteine 190 and cysteine 157–cysteine 175. The helical transmembrane segment at 202–224 threads the bilayer; sequence LYLIGIAAIVVAVIMIFEMILSM. Glutamate 219 is a cholesterol binding site. The Cytoplasmic segment spans residues 225-236; it reads VLCCGIRNSSVY.

It belongs to the tetraspanin (TM4SF) family. As to quaternary structure, homodimer. Part of a complex composed of CD19, CR2/CD21, CD81 and IFITM1/CD225 in the membrane of mature B cells. Interacts (via the second extracellular domain) with CD19; this interaction is initiated early during biosynthesis in the ER and enables trafficking of only properly folded CD19. Part of a complex that includes MHC class II/HLA-DR molecules and IFITM1. Interacts with IFITM1. Interacts with IFITM2 and IFITM3. Part of integrin-tetraspanin complex composed of CD9, CD81, beta-1 and beta-2 integrins in the membrane of monocyte/macrophages. Interacts (via the second extracellular domain) with integrin ITGAV:ITGB3. Interacts with CD247/CD3 zeta, ICAM1 and CD9 at the immune synapse on T cell membrane. Part of a GPCR-tetraspanin complex consisting at least of ADGRG1, CD81, possibly CD9, and GNA11 in which CD81 enhances the association of ADGRG1 with GNA11. Part of a complex composed of CD9, CD81, PTGFRN and IGSF8. Interacts directly with IGSF8. Interacts with CD53 and SCIMP. Interacts with SAMHD1 (via its C-terminus). Interacts with glypican GPC3 and with the transcriptional repressor HHEX; binding to GPC3 decreases the availability of free CD81 for binding to HHEX, resulting in nuclear translocation of HHEX and transcriptional repression. Interacts with CLDN1. Interacts with CLDN6 and CLDN9. Post-translationally, not glycosylated. Likely constitutively palmitoylated at low levels. Protein palmitoylation is up-regulated upon coligation of BCR and CD9-C2R-CD81 complexes in lipid rafts.

It is found in the cell membrane. The protein resides in the basolateral cell membrane. In terms of biological role, structural component of specialized membrane microdomains known as tetraspanin-enriched microdomains (TERMs), which act as platforms for receptor clustering and signaling. Essential for trafficking and compartmentalization of CD19 receptor on the surface of activated B cells. Upon initial encounter with microbial pathogens, enables the assembly of CD19-CR2/CD21 and B cell receptor (BCR) complexes at signaling TERMs, lowering the threshold dose of antigen required to trigger B cell clonal expansion and antibody production. In T cells, facilitates the localization of CD247/CD3 zeta at antigen-induced synapses with B cells, providing for costimulation and polarization toward T helper type 2 phenotype. Present in MHC class II compartments, may also play a role in antigen presentation. Can act both as positive and negative regulator of homotypic or heterotypic cell-cell fusion processes. Positively regulates sperm-egg fusion and may be involved in acrosome reaction. In myoblasts, associates with CD9 and PTGFRN and inhibits myotube fusion during muscle regeneration. In macrophages, associates with CD9 and beta-1 and beta-2 integrins, and prevents macrophage fusion into multinucleated giant cells specialized in ingesting complement-opsonized large particles. Also prevents the fusion of mononuclear cell progenitors into osteoclasts in charge of bone resorption. May regulate the compartmentalization of enzymatic activities. In T cells, defines the subcellular localization of dNTPase SAMHD1 and permits its degradation by the proteasome, thereby controlling intracellular dNTP levels. Also involved in cell adhesion and motility. Positively regulates integrin-mediated adhesion of macrophages, particularly relevant for the inflammatory response in the lung. This is CD81 antigen (Cd81) from Rattus norvegicus (Rat).